The chain runs to 935 residues: Bifunctional alpha-galactosidase/sucrose kinase AgaSK (935 aa).

Residues 1–720 (MAIIYNPNKK…EAYQFAFTEL (720 aa)) are alpha-galactosidase. Positions 176, 277, and 280 each coordinate Mg(2+). Substrate contacts are provided by residues 366–367 (DD), Arg-443, 476–480 (KWDMN), and 518–521 (CSGG). Residue Asp-526 is the Nucleophile of the active site. A substrate-binding site is contributed by Asp-540. The Proton donor/acceptor role is filled by Glu-606. A sucrose kinase region spans residues 721 to 935 (KEAGRLYEKV…VGKDGSVYEQ (215 aa)). Residues 748–752 (GGSGS) and Ala-824 contribute to the ATP site.

The protein in the N-terminal section; belongs to the glycosyl hydrolase 36 family. It in the C-terminal section; belongs to the uridine kinase family. As to quaternary structure, homotetramer. The cofactor is Mg(2+).

It carries out the reaction Hydrolysis of terminal, non-reducing alpha-D-galactose residues in alpha-D-galactosides, including galactose oligosaccharides, galactomannans and galactolipids.. Functionally, bifunctional enzyme with alpha-galactosidase and sucrose kinase activities. Produces sucrose-6-phosphate directly from raffinose. Binds ATP. Phosphorylates sucrose specifically on the C6 position of glucose in the presence of ATP. Hydrolyzes melibiose, raffinose, stachyose and synthetic substrate p-nitrophenyl-alpha-D-galactopyranoside with high activity. Low activity against locust bean gum, guar gum and synthetic substrates xylose alpha-D-4-nitrophenol, glucose alpha-D-4-nitrophenol and o-nitrophenyl-alpha-D-galactopyranoside. The chain is Bifunctional alpha-galactosidase/sucrose kinase AgaSK from Mediterraneibacter gnavus (Ruminococcus gnavus).